We begin with the raw amino-acid sequence, 540 residues long: 2-isopropylmalate synthase (540 aa).

In terms of domain architecture, Pyruvate carboxyltransferase spans 8-269 (VLIFDTTLRD…YFNPFFGREP (262 aa)). Residues Asp17, His208, His210, and Asn244 each coordinate Mn(2+). Residues 408–540 (QLRLVQVSCG…AVLADLRSGI (133 aa)) are regulatory domain.

It belongs to the alpha-IPM synthase/homocitrate synthase family. LeuA type 1 subfamily. As to quaternary structure, homodimer. The cofactor is Mn(2+).

The protein resides in the cytoplasm. The catalysed reaction is 3-methyl-2-oxobutanoate + acetyl-CoA + H2O = (2S)-2-isopropylmalate + CoA + H(+). Its pathway is amino-acid biosynthesis; L-leucine biosynthesis; L-leucine from 3-methyl-2-oxobutanoate: step 1/4. Catalyzes the condensation of the acetyl group of acetyl-CoA with 3-methyl-2-oxobutanoate (2-ketoisovalerate) to form 3-carboxy-3-hydroxy-4-methylpentanoate (2-isopropylmalate). In Prochlorococcus marinus (strain MIT 9313), this protein is 2-isopropylmalate synthase.